A 351-amino-acid polypeptide reads, in one-letter code: Probable dual-specificity RNA methyltransferase RlmN (351 aa).

E92 acts as the Proton acceptor in catalysis. Residues 98–334 (SGDRLTVCVS…VRWSKGLGAD (237 aa)) form the Radical SAM core domain. C105 and C337 are joined by a disulfide. Residues C112, C116, and C119 each contribute to the [4Fe-4S] cluster site. S-adenosyl-L-methionine-binding positions include 159 to 160 (GE), S189, 218 to 220 (SLH), and N294. Residue C337 is the S-methylcysteine intermediate of the active site.

It belongs to the radical SAM superfamily. RlmN family. [4Fe-4S] cluster serves as cofactor.

The protein localises to the cytoplasm. It catalyses the reaction adenosine(2503) in 23S rRNA + 2 reduced [2Fe-2S]-[ferredoxin] + 2 S-adenosyl-L-methionine = 2-methyladenosine(2503) in 23S rRNA + 5'-deoxyadenosine + L-methionine + 2 oxidized [2Fe-2S]-[ferredoxin] + S-adenosyl-L-homocysteine. The enzyme catalyses adenosine(37) in tRNA + 2 reduced [2Fe-2S]-[ferredoxin] + 2 S-adenosyl-L-methionine = 2-methyladenosine(37) in tRNA + 5'-deoxyadenosine + L-methionine + 2 oxidized [2Fe-2S]-[ferredoxin] + S-adenosyl-L-homocysteine. In terms of biological role, specifically methylates position 2 of adenine 2503 in 23S rRNA and position 2 of adenine 37 in tRNAs. In Synechococcus sp. (strain ATCC 27144 / PCC 6301 / SAUG 1402/1) (Anacystis nidulans), this protein is Probable dual-specificity RNA methyltransferase RlmN.